Consider the following 261-residue polypeptide: (R)-S-adenosyl-L-methionine hydrolase (261 aa).

Positions 12, 72, and 187 each coordinate adenosine. Residues asparagine 187, serine 231, and valine 239 each contribute to the (R)-S-adenosyl-L-methionine site. Valine 239 is an adenosine binding site.

This sequence belongs to the SAM hydrolase / SAM-dependent halogenase family.

The catalysed reaction is (R)-S-adenosyl-L-methionine + H2O = adenosine + L-methionine + H(+). Its activity is regulated as follows. Activity is inhibited by chloride. Functionally, catalyzes the hydrolysis of S-adenosyl-L-methionine (SAM) into adenosine and L-methionine. Is likely stereoselective, specifically hydrolyzing (R)-S-adenosyl-L-methionine ((R)-SAM), the inactive form of the ubiquitous cofactor SAM, and not the active form of SAM, (S)-S-adenosyl-L-methionine. Probaly plays a role in preventing accumulation of (R)-S-adenosyl-L-methionine in cells; maintenance of (S)-S-denosyl-L-methionine homochirality is important for cellular health given that the (R)-form is largely inactive as a methyl donor and can function as an inhibitor of methyltransferases. Shows very slow iodinase activity in vitro. This Salinispora arenicola (strain CNS-205) protein is (R)-S-adenosyl-L-methionine hydrolase.